The chain runs to 382 residues: MTEFWLISAPGEKTCQQTWEKLMAATTKNNNLSTNAKFNIPDLKVGTLDVLVGLSDELAKLDAFVEGTVKKVAQYMADVLEDSRDKVQENLLANGVDLVTYITRFQWDMAKYPIKQSLKNISEIIAKGVTQIDNDLKARASAYNNLKGNLQNLERKNAGSLITRSLAEIVKKDDFVLDSEYLITLLVVVPKNNYNDWVKQYETLAEMVVPRSSNVLSEDQDSYLCNVTLFRKAVDDFRHKARENKFVVRDFQYNEEEMKADKEEMNRLSTDKKKQFGPLVRWLKVNFSEAFIAWIHVKALRVFVESVLRYGLPVNFQAMLLQPNKKTMKKLREVLYDLYKHLDSSAASIIDAPMDIPGLNLSQQEYYPYVYYKIDCNLLEFK.

An N-acetylthreonine modification is found at threonine 2.

Belongs to the V-ATPase C subunit family. V-ATPase is a heteromultimeric enzyme made up of two complexes: the ATP-hydrolytic V1 complex and the proton translocation V0 complex. The V1 complex consists of three catalytic AB heterodimers that form a heterohexamer, three peripheral stalks each consisting of EG heterodimers, one central rotor including subunits D and F, and the regulatory subunits C and H. The proton translocation complex V0 consists of the proton transport subunit a, a ring of proteolipid subunits c9c'', rotary subunit d, subunits e and f, and two accessory subunits.

Subunit of the V1 complex of vacuolar(H+)-ATPase (V-ATPase), a multisubunit enzyme composed of a peripheral complex (V1) that hydrolyzes ATP and a membrane integral complex (V0) that translocates protons. V-ATPase is responsible for acidifying and maintaining the pH of intracellular compartments and in some cell types, is targeted to the plasma membrane, where it is responsible for acidifying the extracellular environment. Subunit C is necessary for the assembly of the catalytic sector of the enzyme and is likely to have a specific function in its catalytic activity. This chain is V-type proton ATPase subunit C 1 (atp6v1c1), found in Xenopus tropicalis (Western clawed frog).